The sequence spans 173 residues: MAPLLKLLDSSLRVSVIPLSAATIWLTVTNHQDNSSYGNLKYSNIMGLKYMVCISAICASYAFVAAVSIWIKCLVNKVWLFFVSDQIIAYLMVTSVAAAMEILYIAYNGDQKVTWSEACTSYGKFCNGMKTALILHALTLCFFIVLAVISAYRAFSMYQPPVSSKETVEGDAT.

The Cytoplasmic segment spans residues 1 to 9 (MAPLLKLLD). A helical membrane pass occupies residues 10–29 (SSLRVSVIPLSAATIWLTVT). The Extracellular segment spans residues 30-50 (NHQDNSSYGNLKYSNIMGLKY). Asparagine 34 carries N-linked (GlcNAc...) asparagine glycosylation. The helical transmembrane segment at 51–71 (MVCISAICASYAFVAAVSIWI) threads the bilayer. At 72-86 (KCLVNKVWLFFVSDQ) the chain is on the cytoplasmic side. Residues 87–107 (IIAYLMVTSVAAAMEILYIAY) form a helical membrane-spanning segment. Residues 108–131 (NGDQKVTWSEACTSYGKFCNGMKT) are Extracellular-facing. A helical membrane pass occupies residues 132 to 152 (ALILHALTLCFFIVLAVISAY). The Cytoplasmic portion of the chain corresponds to 153–173 (RAFSMYQPPVSSKETVEGDAT).

The protein belongs to the Casparian strip membrane proteins (CASP) family. In terms of assembly, homodimer and heterodimers.

It is found in the cell membrane. The polypeptide is CASP-like protein 2D1 (Ricinus communis (Castor bean)).